We begin with the raw amino-acid sequence, 156 residues long: Putative pre-16S rRNA nuclease (156 aa).

It belongs to the YqgF nuclease family.

It localises to the cytoplasm. In terms of biological role, could be a nuclease involved in processing of the 5'-end of pre-16S rRNA. The protein is Putative pre-16S rRNA nuclease of Albidiferax ferrireducens (strain ATCC BAA-621 / DSM 15236 / T118) (Rhodoferax ferrireducens).